The chain runs to 357 residues: Ketoreductase CTB6 (357 aa).

An NADP(+)-binding site is contributed by Y172.

It belongs to the NAD(P)-dependent epimerase/dehydratase family. Dihydroflavonol-4-reductase subfamily.

It participates in mycotoxin biosynthesis. Ketoreductase; part of the gene cluster that mediates the biosynthesis of cercosporin, a light-activated, non-host-selective toxin. The perylenequinone chromophore of cercosporin absorbs light energy to attain an electronically-activated triplet state and produces active oxygen species such as the hydroxyl radical, superoxide, hydrogen peroxide or singlet oxygen upon reaction with oxygen molecules. These reactive oxygen species cause damage to various cellular components including lipids, proteins and nucleic acids. The first step of cercosporin biosynthesis is performed by the polyketide synthase CTB1 which catalyzes the formation of nor-toralactone. The starter unit acyltransferase (SAT) domain of CTB1 initiates polyketide extension by the selective utilization of acetyl-CoA, which is elongated to the heptaketide in the beta-ketoacyl synthase (KS) domain by successive condensations with six malonyl units introduced by the malonyl acyltransferase (MAT) domain. The product template (PT) domain catalyzes C4-C9 and C2-C11 aldol cyclizations and dehydrations to a trihydroxynaphthalene, which is thought to be delivered to the thioesterase (TE) domain for product release. The bifunctional enzyme CTB3 then methylates nor-toralactone to toralactone before conducting an unusual oxidative aromatic ring opening. The O-methyltransferase CTB2 further methylates the nascent OH-6 of the CBT3 product, blocking further oxidation at this site before the reductase CTB6 reduces the 2-oxopropyl ketone at position C7, giving naphthalene. The FAD-dependent monooxygenase CTB5 in concert with the multicopper oxidase CTB12 are responsible for homodimerization of naphthalene with CTB7 installing the dioxepine moiety, finally producing cercosporin. The fasciclin domain-containing protein CTB11 might act with CTB5 and CTB12 whereas the roles of CTB9 and CTB10 have still to be elucidated. The sequence is that of Ketoreductase CTB6 from Cercospora nicotianae (Barn spot disease fungus).